Consider the following 339-residue polypeptide: GTPase Obg (339 aa).

The region spanning 1–159 (MKFVDEAFVR…RELKLELKLL (159 aa)) is the Obg domain. Residues 160 to 333 (ADVGLLGLPN…LCYDLMSFLE (174 aa)) form the OBG-type G domain. GTP is bound by residues 166 to 173 (GLPNAGKS), 191 to 195 (FTTLY), 213 to 216 (DIPG), 283 to 286 (NKID), and 314 to 316 (SAI). Residues S173 and T193 each coordinate Mg(2+).

It belongs to the TRAFAC class OBG-HflX-like GTPase superfamily. OBG GTPase family. As to quaternary structure, monomer. It depends on Mg(2+) as a cofactor.

The protein localises to the cytoplasm. Functionally, an essential GTPase which binds GTP, GDP and possibly (p)ppGpp with moderate affinity, with high nucleotide exchange rates and a fairly low GTP hydrolysis rate. Plays a role in control of the cell cycle, stress response, ribosome biogenesis and in those bacteria that undergo differentiation, in morphogenesis control. The sequence is that of GTPase Obg from Coxiella burnetii (strain RSA 331 / Henzerling II).